A 227-amino-acid polypeptide reads, in one-letter code: ATP synthase F(0) complex subunit a (227 aa).

Transmembrane regions (helical) follow at residues proline 12–proline 32, tryptophan 69–leucine 89, glutamine 98–leucine 118, isoleucine 139–valine 159, leucine 170–serine 190, and isoleucine 196–valine 216.

Belongs to the ATPase A chain family. As to quaternary structure, component of the ATP synthase complex composed at least of ATP5F1A/subunit alpha, ATP5F1B/subunit beta, ATP5MC1/subunit c (homooctomer), MT-ATP6/subunit a, MT-ATP8/subunit 8, ATP5ME/subunit e, ATP5MF/subunit f, ATP5MG/subunit g, ATP5MK/subunit k, ATP5MJ/subunit j, ATP5F1C/subunit gamma, ATP5F1D/subunit delta, ATP5F1E/subunit epsilon, ATP5PF/subunit F6, ATP5PB/subunit b, ATP5PD/subunit d, ATP5PO/subunit OSCP. ATP synthase complex consists of a soluble F(1) head domain (subunits alpha(3) and beta(3)) - the catalytic core - and a membrane F(0) domain - the membrane proton channel (subunits c, a, 8, e, f, g, k and j). These two domains are linked by a central stalk (subunits gamma, delta, and epsilon) rotating inside the F1 region and a stationary peripheral stalk (subunits F6, b, d, and OSCP). Interacts with DNAJC30; interaction is direct.

It is found in the mitochondrion inner membrane. The catalysed reaction is H(+)(in) = H(+)(out). In terms of biological role, subunit a, of the mitochondrial membrane ATP synthase complex (F(1)F(0) ATP synthase or Complex V) that produces ATP from ADP in the presence of a proton gradient across the membrane which is generated by electron transport complexes of the respiratory chain. ATP synthase complex consist of a soluble F(1) head domain - the catalytic core - and a membrane F(1) domain - the membrane proton channel. These two domains are linked by a central stalk rotating inside the F(1) region and a stationary peripheral stalk. During catalysis, ATP synthesis in the catalytic domain of F(1) is coupled via a rotary mechanism of the central stalk subunits to proton translocation. With the subunit c (ATP5MC1), forms the proton-conducting channel in the F(0) domain, that contains two crucial half-channels (inlet and outlet) that facilitate proton movement from the mitochondrial intermembrane space (IMS) into the matrix. Protons are taken up via the inlet half-channel and released through the outlet half-channel, following a Grotthuss mechanism. The sequence is that of ATP synthase F(0) complex subunit a from Coturnix japonica (Japanese quail).